Reading from the N-terminus, the 355-residue chain is UDP-3-O-acylglucosamine N-acyltransferase (355 aa).

Catalysis depends on His-248, which acts as the Proton acceptor.

The protein belongs to the transferase hexapeptide repeat family. LpxD subfamily. As to quaternary structure, homotrimer.

The enzyme catalyses a UDP-3-O-[(3R)-3-hydroxyacyl]-alpha-D-glucosamine + a (3R)-hydroxyacyl-[ACP] = a UDP-2-N,3-O-bis[(3R)-3-hydroxyacyl]-alpha-D-glucosamine + holo-[ACP] + H(+). Its pathway is bacterial outer membrane biogenesis; LPS lipid A biosynthesis. In terms of biological role, catalyzes the N-acylation of UDP-3-O-acylglucosamine using 3-hydroxyacyl-ACP as the acyl donor. Is involved in the biosynthesis of lipid A, a phosphorylated glycolipid that anchors the lipopolysaccharide to the outer membrane of the cell. This chain is UDP-3-O-acylglucosamine N-acyltransferase, found in Syntrophobacter fumaroxidans (strain DSM 10017 / MPOB).